We begin with the raw amino-acid sequence, 308 residues long: Transaldolase (308 aa).

The Schiff-base intermediate with substrate role is filled by lysine 125.

Belongs to the transaldolase family. Type 1 subfamily. In terms of assembly, homodimer.

Its subcellular location is the cytoplasm. The enzyme catalyses D-sedoheptulose 7-phosphate + D-glyceraldehyde 3-phosphate = D-erythrose 4-phosphate + beta-D-fructose 6-phosphate. It participates in carbohydrate degradation; pentose phosphate pathway; D-glyceraldehyde 3-phosphate and beta-D-fructose 6-phosphate from D-ribose 5-phosphate and D-xylulose 5-phosphate (non-oxidative stage): step 2/3. Transaldolase is important for the balance of metabolites in the pentose-phosphate pathway. The chain is Transaldolase from Ectopseudomonas mendocina (strain ymp) (Pseudomonas mendocina).